Here is a 397-residue protein sequence, read N- to C-terminus: Decapping and exoribonuclease protein (397 aa).

Residues M1–A10 are compositionally biased toward basic residues. Positions M1 to R30 are disordered. Substrate contacts are provided by residues R58, E101, and W131–G133. Position 185 (M185) interacts with adenosine 3',5'-bisphosphate. E192 contacts Mg(2+). 2 residues coordinate substrate: C217 and E234. E234, D236, E253, and L254 together coordinate Mg(2+). D236 lines the adenosine 3',5'-bisphosphate pocket. The tract at residues E253–T256 is adenosine 3',5'-bisphosphate; inhibitor. Substrate-binding residues include K255 and Q280. Residue Q280 coordinates adenosine 3',5'-bisphosphate. Position 392 is a phosphothreonine (T392). S394 bears the Phosphoserine mark.

The protein belongs to the DXO/Dom3Z family. The cofactor is Mg(2+).

It is found in the nucleus. The catalysed reaction is a 5'-end triphospho-ribonucleoside in mRNA + H2O = a 5'-end phospho-ribonucleoside in mRNA + diphosphate + H(+). The enzyme catalyses a 5'-end NAD(+)-phospho-ribonucleoside in mRNA + H2O = a 5'-end phospho-ribonucleoside in mRNA + NAD(+) + H(+). It catalyses the reaction a 5'-end NAD(+)-phospho-ribonucleoside in snoRNA + H2O = a 5'-end phospho-ribonucleoside in snoRNA + NAD(+) + H(+). It carries out the reaction a 5'-end (N(7)-methyl 5'-triphosphoguanosine)-ribonucleoside-ribonucleotide in mRNA + H2O = a (N(7)-methyl 5'-triphosphoguanosine)-nucleoside + a 5'-end phospho-ribonucleoside in mRNA + H(+). The catalysed reaction is a 5'-end FAD-phospho-ribonucleoside in mRNA + H2O = a 5'-end phospho-ribonucleoside in mRNA + FAD + H(+). The enzyme catalyses a 5'-end CoA-ribonucleoside in mRNA + H2O = 3'-dephospho-CoA + a 5'-end phospho-ribonucleoside in mRNA + H(+). Its activity is regulated as follows. The 5'-3' exoribonuclease activity is inhibited by adenosine 3',5'-bisphosphate. In terms of biological role, decapping enzyme for NAD-capped RNAs: specifically hydrolyzes the nicotinamide adenine dinucleotide (NAD) cap from a subset of RNAs by removing the entire NAD moiety from the 5'-end of an NAD-capped RNA. The NAD-cap is present at the 5'-end of some RNAs and snoRNAs. In contrast to the canonical 5'-end N7 methylguanosine (m7G) cap, the NAD cap promotes mRNA decay. Preferentially acts on NAD-capped transcripts in response to environmental stress. Also acts as a non-canonical decapping enzyme that removes the entire cap structure of m7G capped or incompletely capped RNAs and mediates their subsequent degradation. Specifically degrades pre-mRNAs with a defective 5'-end m7G cap and is part of a pre-mRNA capping quality control. Has decapping activity toward incomplete 5'-end m7G cap mRNAs such as unmethylated 5'-end-capped RNA (cap0), while it has no activity toward 2'-O-ribose methylated m7G cap (cap1). In contrast to canonical decapping enzymes DCP2 and NUDT16, which cleave the cap within the triphosphate linkage, the decapping activity releases the entire cap structure GpppN and a 5'-end monophosphate RNA. Also has 5'-3' exoribonuclease activities: The 5'-end monophosphate RNA is then degraded by the 5'-3' exoribonuclease activity, enabling this enzyme to decap and degrade incompletely capped mRNAs. Also possesses RNA 5'-pyrophosphohydrolase activity by hydrolyzing the 5'-end triphosphate to release pyrophosphates. Exhibits decapping activity towards FAD-capped RNAs. Exhibits decapping activity towards dpCoA-capped RNAs in vitro. In Mus musculus (Mouse), this protein is Decapping and exoribonuclease protein.